Here is a 128-residue protein sequence, read N- to C-terminus: MKKVKTVSKSKKEFITGVVHIRATFNNTFVNVTDVHGNTLCQTSVGACGFSGSRKSTPYAAGKAAESAAKNAMERFGMKVVSVIIRGPGFGTEAAVKAFQSCGLTVTSIADKTAIPHNGCRLRKKRRV.

The protein belongs to the universal ribosomal protein uS11 family. As to quaternary structure, part of the 30S ribosomal subunit. Interacts with proteins S7 and S18. Binds to IF-3.

In terms of biological role, located on the platform of the 30S subunit, it bridges several disparate RNA helices of the 16S rRNA. Forms part of the Shine-Dalgarno cleft in the 70S ribosome. In Wolbachia pipientis wMel, this protein is Small ribosomal subunit protein uS11.